The chain runs to 370 residues: Probable phosphoserine aminotransferase (370 aa).

An L-glutamate-binding site is contributed by R45. Pyridoxal 5'-phosphate-binding positions include 79–80 (GT), W105, T154, D175, and Q198. K199 bears the N6-(pyridoxal phosphate)lysine mark. 240-241 (NT) is a binding site for pyridoxal 5'-phosphate.

This sequence belongs to the class-V pyridoxal-phosphate-dependent aminotransferase family. SerC subfamily. As to quaternary structure, homodimer. Pyridoxal 5'-phosphate serves as cofactor.

It carries out the reaction O-phospho-L-serine + 2-oxoglutarate = 3-phosphooxypyruvate + L-glutamate. The enzyme catalyses 4-(phosphooxy)-L-threonine + 2-oxoglutarate = (R)-3-hydroxy-2-oxo-4-phosphooxybutanoate + L-glutamate. The protein operates within amino-acid biosynthesis; L-serine biosynthesis; L-serine from 3-phospho-D-glycerate: step 2/3. Its pathway is cofactor biosynthesis; pyridoxine 5'-phosphate biosynthesis; pyridoxine 5'-phosphate from D-erythrose 4-phosphate: step 3/5. Catalyzes the reversible conversion of 3-phosphohydroxypyruvate to phosphoserine and of 3-hydroxy-2-oxo-4-phosphonooxybutanoate to phosphohydroxythreonine. The protein is Probable phosphoserine aminotransferase of Caenorhabditis elegans.